The chain runs to 240 residues: Protein UL136 (240 aa).

Residues 69 to 89 (VICAVLLTLMIMAIGALIAYL) traverse the membrane as a helical segment. Disordered stretches follow at residues 119 to 143 (ERQRSRRRAMDVPDPELGDPARRPL) and 164 to 200 (TRPAPPALSSPETGDDSNDDAVAGGGAGGVTSSATRT).

This sequence belongs to the HHV-5 UL136 protein family. Interacts with host ATP1B1.

The protein resides in the host membrane. The polypeptide is Protein UL136 (UL136) (Human cytomegalovirus (strain Merlin) (HHV-5)).